The following is a 317-amino-acid chain: Heme A synthase (317 aa).

The Cytoplasmic portion of the chain corresponds to 1-6 (MQRSLK). Residues 7-27 (WFASTTTVAMLFVLIGGALVT) form a helical membrane-spanning segment. Over 28–54 (KTDSGMGCGRSWPLCHGQWIPDDITPQ) the chain is Extracellular. The cysteines at positions 35 and 42 are disulfide-linked. Residues 55-75 (LVIELSHRLVSGLAAIMVLIL) traverse the membrane as a helical segment. The active site involves Glu58. His61 is a binding site for heme o. Residues 76–91 (CIRSWRVMGHVRETKP) lie on the Cytoplasmic side of the membrane. A helical transmembrane segment spans residues 92 to 112 (LAVLSFVFLVLQSLIGAAAVV). The Extracellular segment spans residues 113–123 (WGQSDFVMALH). His123 provides a ligand contact to heme o. Residues 124–144 (FGISLISFAAVLLLTLLIFVV) form a helical membrane-spanning segment. Over 145-159 (DKKFSPTSLQLDGQM) the chain is Cytoplasmic. The helical transmembrane segment at 160–180 (RFHIYGIIIYSYLVVYTGALV) threads the bilayer. Residues 181 to 214 (RHTNASLACPSWPLCAKSRLLPVQFHEWVQMGHR) lie on the Extracellular side of the membrane. An intrachain disulfide couples Cys189 to Cys195. His213 provides a ligand contact to heme b. A helical membrane pass occupies residues 215-235 (LAAAVIIIWIAVATVHAARYY). At 236–243 (REQPVIYY) the chain is on the cytoplasmic side. The chain crosses the membrane as a helical span at residues 244 to 264 (GWIISLLLVLAQMVTGALVVF). Over 265–272 (TELNLYIS) the chain is Extracellular. The helical transmembrane segment at 273 to 293 (LAHAFFISCLFGVLSYLLLLA) threads the bilayer. A heme b-binding site is contributed by His275. At 294–317 (LRTRRRPATAAGRSVEDTASAPLK) the chain is on the cytoplasmic side.

This sequence belongs to the COX15/CtaA family. Type 1 subfamily. In terms of assembly, interacts with CtaB. Heme b is required as a cofactor.

It localises to the cell membrane. It catalyses the reaction Fe(II)-heme o + 2 A + H2O = Fe(II)-heme a + 2 AH2. It participates in porphyrin-containing compound metabolism; heme A biosynthesis; heme A from heme O: step 1/1. Its function is as follows. Catalyzes the conversion of heme O to heme A by two successive hydroxylations of the methyl group at C8. The first hydroxylation forms heme I, the second hydroxylation results in an unstable dihydroxymethyl group, which spontaneously dehydrates, resulting in the formyl group of heme A. The protein is Heme A synthase of Geobacillus thermodenitrificans.